Here is a 424-residue protein sequence, read N- to C-terminus: GTPase Obg (424 aa).

The Obg domain occupies 1–158; the sequence is MFYDQAKIYV…RNLLLELKLL (158 aa). The 171-residue stretch at 159–329 folds into the OBG-type G domain; that stretch reads ADVGLVGFPN…LVYAAAKALP (171 aa). GTP-binding positions include 165 to 172, 190 to 194, 212 to 215, 282 to 285, and 310 to 312; these read GFPNVGKS, FTTLV, DIPG, NKMD, and SAA. Mg(2+) is bound by residues Ser-172 and Thr-192. The region spanning 347 to 424 is the OCT domain; it reads TQASAPHRFE…IAGIEFEWEE (78 aa).

It belongs to the TRAFAC class OBG-HflX-like GTPase superfamily. OBG GTPase family. As to quaternary structure, monomer. Requires Mg(2+) as cofactor.

Its subcellular location is the cytoplasm. Functionally, an essential GTPase which binds GTP, GDP and possibly (p)ppGpp with moderate affinity, with high nucleotide exchange rates and a fairly low GTP hydrolysis rate. Plays a role in control of the cell cycle, stress response, ribosome biogenesis and in those bacteria that undergo differentiation, in morphogenesis control. The protein is GTPase Obg of Desulfitobacterium hafniense (strain DSM 10664 / DCB-2).